A 798-amino-acid chain; its full sequence is TBC1 domain family member 10B (798 aa).

3 disordered regions span residues 1–79 (METG…TATS), 118–211 (TDTQ…APAP), and 225–250 (PVEN…GQAP). Position 22 is a phosphoserine (S22). Residues 66–79 (SSQTSASTPTTATS) show a composition bias toward low complexity. The residue at position 129 (S129) is a Phosphoserine. T136 bears the Phosphothreonine mark. Positions 136–161 (TPTRTPSRMAPGALTAKPPLAPKPGT) are enriched in low complexity. R170 is subject to Omega-N-methylarginine. The Rab-GAP TBC domain maps to 346–534 (GIPSSLRAKA…RVWDMFFCEG (189 aa)). A disordered region spans residues 618 to 798 (PSRRLHGSRA…AAEARQDAYF (181 aa)). Low complexity predominate over residues 641–662 (PSSSLLSLPSLKSRGSRAVGGA). A phosphoserine mark is found at S644, S647, S650, S664, and S673. Residues 693–702 (SPTGNSTPLG) show a composition bias toward polar residues. The stretch at 702-769 (GTSKEIRRQE…LEKKGQGRKL (68 aa)) forms a coiled coil. 2 stretches are compositionally biased toward basic and acidic residues: residues 705-764 (KEIR…EKKG) and 783-798 (DGGD…DAYF).

The protein localises to the cytoplasm. In terms of biological role, acts as a GTPase-activating protein for RAB3A, RAB22A, RAB27A and RAB35. Does not act on RAB2A and RAB6A. This chain is TBC1 domain family member 10B (Tbc1d10b), found in Mus musculus (Mouse).